The sequence spans 155 residues: Large ribosomal subunit protein eL24 (155 aa).

The disordered stretch occupies residues 92-155; that stretch reads AKRNMKPEVR…KSAPRVGGKR (64 aa). The span at 96–117 shows a compositional bias: basic and acidic residues; the sequence is MKPEVRKAQRDQAIKAAKEQKK. The span at 124 to 133 shows a compositional bias: low complexity; that stretch reads KASAPAPKAK.

It belongs to the eukaryotic ribosomal protein eL24 family.

The polypeptide is Large ribosomal subunit protein eL24 (RpL24) (Spodoptera frugiperda (Fall armyworm)).